The chain runs to 282 residues: 4-hydroxy-3-methylbut-2-enyl diphosphate reductase (282 aa).

Cysteine 12 contacts [4Fe-4S] cluster. Residues histidine 40 and histidine 72 each contribute to the (2E)-4-hydroxy-3-methylbut-2-enyl diphosphate site. Residues histidine 40 and histidine 72 each coordinate dimethylallyl diphosphate. The isopentenyl diphosphate site is built by histidine 40 and histidine 72. Cysteine 94 serves as a coordination point for [4Fe-4S] cluster. Histidine 122 contacts (2E)-4-hydroxy-3-methylbut-2-enyl diphosphate. A dimethylallyl diphosphate-binding site is contributed by histidine 122. Histidine 122 contacts isopentenyl diphosphate. Glutamate 124 functions as the Proton donor in the catalytic mechanism. Threonine 160 serves as a coordination point for (2E)-4-hydroxy-3-methylbut-2-enyl diphosphate. Cysteine 188 is a [4Fe-4S] cluster binding site. (2E)-4-hydroxy-3-methylbut-2-enyl diphosphate is bound by residues serine 216, asparagine 218, and serine 260. Dimethylallyl diphosphate-binding residues include serine 216, asparagine 218, and serine 260. Isopentenyl diphosphate is bound by residues serine 216, asparagine 218, and serine 260.

The protein belongs to the IspH family. Requires [4Fe-4S] cluster as cofactor.

It carries out the reaction isopentenyl diphosphate + 2 oxidized [2Fe-2S]-[ferredoxin] + H2O = (2E)-4-hydroxy-3-methylbut-2-enyl diphosphate + 2 reduced [2Fe-2S]-[ferredoxin] + 2 H(+). The enzyme catalyses dimethylallyl diphosphate + 2 oxidized [2Fe-2S]-[ferredoxin] + H2O = (2E)-4-hydroxy-3-methylbut-2-enyl diphosphate + 2 reduced [2Fe-2S]-[ferredoxin] + 2 H(+). It participates in isoprenoid biosynthesis; dimethylallyl diphosphate biosynthesis; dimethylallyl diphosphate from (2E)-4-hydroxy-3-methylbutenyl diphosphate: step 1/1. It functions in the pathway isoprenoid biosynthesis; isopentenyl diphosphate biosynthesis via DXP pathway; isopentenyl diphosphate from 1-deoxy-D-xylulose 5-phosphate: step 6/6. In terms of biological role, catalyzes the conversion of 1-hydroxy-2-methyl-2-(E)-butenyl 4-diphosphate (HMBPP) into a mixture of isopentenyl diphosphate (IPP) and dimethylallyl diphosphate (DMAPP). Acts in the terminal step of the DOXP/MEP pathway for isoprenoid precursor biosynthesis. In Geobacter sulfurreducens (strain ATCC 51573 / DSM 12127 / PCA), this protein is 4-hydroxy-3-methylbut-2-enyl diphosphate reductase.